Consider the following 134-residue polypeptide: Profilin-4 (134 aa).

C13 and C118 are joined by a disulfide. An Involved in PIP2 interaction motif is present at residues 84-100 (AVIRGKKGSGGITIKKT). The residue at position 114 (T114) is a Phosphothreonine.

The protein belongs to the profilin family. As to quaternary structure, occurs in many kinds of cells as a complex with monomeric actin in a 1:1 ratio. Phosphorylated by MAP kinases.

The protein resides in the cytoplasm. The protein localises to the cytoskeleton. Its function is as follows. Binds to actin and affects the structure of the cytoskeleton. At high concentrations, profilin prevents the polymerization of actin, whereas it enhances it at low concentrations. The polypeptide is Profilin-4 (Olea europaea (Common olive)).